We begin with the raw amino-acid sequence, 589 residues long: Proline--tRNA ligase (589 aa).

It belongs to the class-II aminoacyl-tRNA synthetase family. ProS type 1 subfamily. Homodimer.

The protein resides in the cytoplasm. The enzyme catalyses tRNA(Pro) + L-proline + ATP = L-prolyl-tRNA(Pro) + AMP + diphosphate. Its function is as follows. Catalyzes the attachment of proline to tRNA(Pro) in a two-step reaction: proline is first activated by ATP to form Pro-AMP and then transferred to the acceptor end of tRNA(Pro). As ProRS can inadvertently accommodate and process non-cognate amino acids such as alanine and cysteine, to avoid such errors it has two additional distinct editing activities against alanine. One activity is designated as 'pretransfer' editing and involves the tRNA(Pro)-independent hydrolysis of activated Ala-AMP. The other activity is designated 'posttransfer' editing and involves deacylation of mischarged Ala-tRNA(Pro). The misacylated Cys-tRNA(Pro) is not edited by ProRS. The chain is Proline--tRNA ligase from Corynebacterium aurimucosum (strain ATCC 700975 / DSM 44827 / CIP 107346 / CN-1) (Corynebacterium nigricans).